We begin with the raw amino-acid sequence, 221 residues long: UPF0758 protein YicR (221 aa).

The region spanning 99–221 (ALLSPEMTLE…YVSFAERGWI (123 aa)) is the MPN domain. Residues His170, His172, and Asp183 each coordinate Zn(2+). Residues 170-183 (HNHPSGCAEPSKAD) carry the JAMM motif motif.

The protein belongs to the UPF0758 family. YicR subfamily.

The protein is UPF0758 protein YicR of Salmonella arizonae (strain ATCC BAA-731 / CDC346-86 / RSK2980).